Consider the following 176-residue polypeptide: Large ribosomal subunit protein uL10 (176 aa).

It belongs to the universal ribosomal protein uL10 family. Part of the ribosomal stalk of the 50S ribosomal subunit. The N-terminus interacts with L11 and the large rRNA to form the base of the stalk. The C-terminus forms an elongated spine to which L12 dimers bind in a sequential fashion forming a multimeric L10(L12)X complex.

Functionally, forms part of the ribosomal stalk, playing a central role in the interaction of the ribosome with GTP-bound translation factors. This Acaryochloris marina (strain MBIC 11017) protein is Large ribosomal subunit protein uL10.